The primary structure comprises 165 residues: Lipoprotein signal peptidase (165 aa).

A run of 4 helical transmembrane segments spans residues Phe7–Ile27, Thr28–Val48, Phe61–Trp81, and Asp87–Ile107. Residues Asp117 and Asp136 contribute to the active site. The helical transmembrane segment at Ser128 to Ile148 threads the bilayer.

Belongs to the peptidase A8 family.

The protein resides in the cell inner membrane. It catalyses the reaction Release of signal peptides from bacterial membrane prolipoproteins. Hydrolyzes -Xaa-Yaa-Zaa-|-(S,diacylglyceryl)Cys-, in which Xaa is hydrophobic (preferably Leu), and Yaa (Ala or Ser) and Zaa (Gly or Ala) have small, neutral side chains.. It participates in protein modification; lipoprotein biosynthesis (signal peptide cleavage). Functionally, this protein specifically catalyzes the removal of signal peptides from prolipoproteins. This Bartonella bacilliformis (strain ATCC 35685 / KC583 / Herrer 020/F12,63) protein is Lipoprotein signal peptidase.